The following is an 803-amino-acid chain: MYVVNRKGEEEPVSFDQILSRITKLSYGLHPLVDPARVTQAVINGLYSGIKTSELDELASQTCAYMAATHNDFSKLAARISTSNLHKNTSSDIGDVASQLYNFKDNQGCPAPLISKPVYDFIMENRERINSKIDFSKDFEYDYFAFKTLERSYLLKIDNKVVERPQHLLMRVSCGIHCGDIEAALETYELLSQKYFTHATPTLFNSGTPRPQMSSCFLLRIPEDSINGIFDTLTKCANISKTAGGLGVAVSNIRGTGSYIRGTNGRSNGLIPMLRVYNDTARYIDQGGGKRKGAIAIYLEPWHVDVVEFIEIRKNHGKEEMRCRDLFPALWVPDLFMERVEKDQDWTLMCPDECRGLQDVWGDDFKKLYEEYEKQGRGRKTMKAQKLWFLILQAQIETGTPFICYKDAANSKSNQKNLGTIVSSNLCTEIIEYTSTDEVAVCNLASIGLPKFVDKNNKTFDFDKLKEVTKVITRNLNKLIDVGYYSLKECKKSNLRHRPLGIGIQGLADCFMMLRMPYESEGAKKLNKQIFEVIYYAALDASCELAEKYGPYETYSGSPASKGILQFDMWGVTPDSGLCDWDLLKDRISKHGIRNSLLISPMPTASTSQILGNNESFEPFTSNIYHRRVLSGEFFVVNPHLLNDLLELGLWDDRLKQNIIANNGSIQNILTIPEDIRELYKTVWEIKQKTVIDMAADRGPYVCQSQSLNIHMENANFAKLSSMHFYGWKKGLKTGIYYLRTQSATRPIQFTVDQQLLKSETKEKDSLETNKRQALEPEAQKLIACPLRPTNMKDDEECMMCSG.

In terms of domain architecture, ATP-cone spans 1 to 91 (MYVVNRKGEE…TSNLHKNTSS (91 aa)). ATP-binding positions include 5–6 (NR), 11–17 (EPVSFDQ), T52, and D56. A GDP-binding site is contributed by S215. The cysteines at positions 216 and 442 are disulfide-linked. DTTP-binding positions include 224 to 226 (DSI), K241, R254, and 261 to 262 (RG). GDP is bound at residue N425. N425 (proton acceptor) is an active-site residue. C427 functions as the Cysteine radical intermediate in the catalytic mechanism. GDP is bound by residues E429 and 604–607 (TAST). E429 (proton acceptor) is an active-site residue.

Belongs to the ribonucleoside diphosphate reductase large chain family. Heterodimer of a large and a small subunit.

The catalysed reaction is a 2'-deoxyribonucleoside 5'-diphosphate + [thioredoxin]-disulfide + H2O = a ribonucleoside 5'-diphosphate + [thioredoxin]-dithiol. With respect to regulation, under complex allosteric control mediated by deoxynucleoside triphosphates and ATP binding to separate specificity and activation sites on the large subunit. The type of nucleotide bound at the specificity site determines substrate preference. It seems probable that ATP makes the enzyme reduce CDP and UDP, dGTP favors ADP reduction and dTTP favors GDP reduction. Stimulated by ATP and inhibited by dATP binding to the activity site. Provides the precursors necessary for DNA synthesis. Catalyzes the biosynthesis of deoxyribonucleotides from the corresponding ribonucleotides. This is Ribonucleoside-diphosphate reductase large chain (RNR1) from Cryptosporidium parvum.